An 860-amino-acid polypeptide reads, in one-letter code: DDB1- and CUL4-associated factor 6 (860 aa).

WD repeat units follow at residues 49-88 (VHDGCVNTICWNDTGEYILSGSDDTKLVISNPYSRKVLTT), 92-133 (GHRA…ETNR), 139-179 (CHYG…SCTK), 189-229 (NCRR…TRAT), and 251-290 (NKSCRVTSLCYSEDGQEILVSYSSDYIYLFDPKDDTAREL). Basic and acidic residues-rich tracts occupy residues 288–303 (RELKTPSAEERREELR) and 312–334 (LRGDWSDTGPRARPESERERDGE). 4 disordered regions span residues 288 to 340 (RELK…PNVS), 355 to 392 (EASEVAQSNRGRGRSRPRGGTSQSDISTLPTVPSSPDL), 407 to 490 (QFLQ…TTST), and 502 to 675 (IASS…GPGD). S336 is subject to Phosphoserine. Composition is skewed to polar residues over residues 379–388 (DISTLPTVPS) and 409–421 (LQPSTSSTMSAQA). A compositionally biased stretch (low complexity) spans 422-441 (HSTSSPTESPHSTPLLSSPD). A compositionally biased stretch (basic and acidic residues) spans 457 to 467 (HQSDNNNEKLS). Residues 480–490 (HYSTEGTTTST) show a composition bias toward polar residues. The segment covering 502-511 (IASSSRGIGS) has biased composition (low complexity). Over residues 535–549 (SETKAPEESSEDVTK) the composition is skewed to basic and acidic residues. Positions 614–626 (TSTESATNENNTN) are enriched in low complexity. The span at 627 to 636 (PEPQFQTEAT) shows a compositional bias: polar residues. Phosphoserine is present on S649. The residue at position 654 (T654) is a Phosphothreonine. At S657 the chain carries Phosphoserine. An IQ domain is found at 676-705 (RRSAVARIQEFFRRRKERKEMEELDTLNIR). WD repeat units follow at residues 718–756 (NSRTMIKEANFWGANFVMSGSDCGHIFIWDRHTAEHLML) and 759–798 (ADNHVVNCLQPHPFDPILASSGIDYDIKIWSPLEESRIFN). 2 positions are modified to phosphoserine: S847 and S850.

Interacts with the nuclear receptors NR3C1 and AR in the presence of ligand. Interacts with DDB1, CUL4A and CUL4B. Highly expressed in skeletal muscle and testis. Expressed to a lesser degree in heart, prostate, and adrenal gland.

The protein resides in the nucleus. Its pathway is protein modification; protein ubiquitination. Ligand-dependent coactivator of nuclear receptors. Enhance transcriptional activity of the nuclear receptors NR3C1 and AR. May function as a substrate receptor for CUL4-DDB1 E3 ubiquitin-protein ligase complex. The protein is DDB1- and CUL4-associated factor 6 (DCAF6) of Homo sapiens (Human).